A 287-amino-acid chain; its full sequence is Ribonuclease Z (287 aa).

7 residues coordinate Zn(2+): histidine 64, histidine 66, aspartate 68, histidine 69, histidine 124, aspartate 191, and histidine 250. Catalysis depends on aspartate 68, which acts as the Proton acceptor.

It belongs to the RNase Z family. Homodimer. Requires Zn(2+) as cofactor.

The enzyme catalyses Endonucleolytic cleavage of RNA, removing extra 3' nucleotides from tRNA precursor, generating 3' termini of tRNAs. A 3'-hydroxy group is left at the tRNA terminus and a 5'-phosphoryl group is left at the trailer molecule.. In terms of biological role, zinc phosphodiesterase, which displays some tRNA 3'-processing endonuclease activity. Probably involved in tRNA maturation, by removing a 3'-trailer from precursor tRNA. The protein is Ribonuclease Z of Pyrobaculum calidifontis (strain DSM 21063 / JCM 11548 / VA1).